The following is a 132-amino-acid chain: UPF0047 protein YugU (132 aa).

It belongs to the UPF0047 family.

The chain is UPF0047 protein YugU (yugU) from Bacillus subtilis (strain 168).